Consider the following 284-residue polypeptide: 2-dehydro-3-deoxyphosphooctonate aldolase (284 aa).

The protein belongs to the KdsA family.

Its subcellular location is the cytoplasm. It carries out the reaction D-arabinose 5-phosphate + phosphoenolpyruvate + H2O = 3-deoxy-alpha-D-manno-2-octulosonate-8-phosphate + phosphate. It functions in the pathway carbohydrate biosynthesis; 3-deoxy-D-manno-octulosonate biosynthesis; 3-deoxy-D-manno-octulosonate from D-ribulose 5-phosphate: step 2/3. The protein operates within bacterial outer membrane biogenesis; lipopolysaccharide biosynthesis. This is 2-dehydro-3-deoxyphosphooctonate aldolase from Burkholderia vietnamiensis (strain G4 / LMG 22486) (Burkholderia cepacia (strain R1808)).